The primary structure comprises 142 residues: MRGAVLRLGAARGQLRLEQEHLLEDIAHVRQRLDDEARQRQEAEAAARALARFAQEAEAARVELQKKAQALQEECGYLRRHHQEEAQAEARDALKCDVTSALREIRAQLEGHAVQSTLQQEEWFRVRLDRLSEAAKVNTDAM.

The IF rod domain occupies M1 to M142. Residues I26–E74 are a coiled coil.

Belongs to the intermediate filament family. In terms of assembly, forms heterodimers with NEFL; which can further hetero-oligomerize (in vitro). Forms heterodimers with INA (in vitro). There are a number of repeats of the tripeptide K-S-P, NFH is phosphorylated on a number of the serines in this motif. It is thought that phosphorylation of NFH results in the formation of interfilament cross bridges that are important in the maintenance of axonal caliber. In terms of processing, phosphorylation seems to play a major role in the functioning of the larger neurofilament polypeptides (NF-M and NF-H), the levels of phosphorylation being altered developmentally and coincidentally with a change in the neurofilament function. Post-translationally, phosphorylated in the head and rod regions by the PKC kinase PKN1, leading to the inhibition of polymerization.

The protein resides in the cytoplasm. The protein localises to the cytoskeleton. It localises to the cell projection. Its subcellular location is the axon. Its function is as follows. Neurofilaments usually contain three intermediate filament proteins: NEFL, NEFM, and NEFH which are involved in the maintenance of neuronal caliber. NEFH has an important function in mature axons that is not subserved by the two smaller NF proteins. May additionally cooperate with the neuronal intermediate filament proteins PRPH and INA to form neuronal filamentous networks. This Sus scrofa (Pig) protein is Neurofilament heavy polypeptide (NEFH).